A 394-amino-acid polypeptide reads, in one-letter code: 8-amino-7-oxononanoate synthase (394 aa).

Arg-21 provides a ligand contact to substrate. Pyridoxal 5'-phosphate is bound at residue 112–113 (GY). His-137 contributes to the substrate binding site. Pyridoxal 5'-phosphate contacts are provided by Ser-183, His-211, and Thr-239. Residue Lys-242 is modified to N6-(pyridoxal phosphate)lysine. Thr-358 provides a ligand contact to substrate.

The protein belongs to the class-II pyridoxal-phosphate-dependent aminotransferase family. BioF subfamily. In terms of assembly, homodimer. Pyridoxal 5'-phosphate is required as a cofactor.

It carries out the reaction 6-carboxyhexanoyl-[ACP] + L-alanine + H(+) = (8S)-8-amino-7-oxononanoate + holo-[ACP] + CO2. It functions in the pathway cofactor biosynthesis; biotin biosynthesis. Its function is as follows. Catalyzes the decarboxylative condensation of pimeloyl-[acyl-carrier protein] and L-alanine to produce 8-amino-7-oxononanoate (AON), [acyl-carrier protein], and carbon dioxide. The polypeptide is 8-amino-7-oxononanoate synthase (Burkholderia pseudomallei (strain K96243)).